We begin with the raw amino-acid sequence, 137 residues long: Small ribosomal subunit protein uS12 (137 aa).

Positions 1–55 (MPTINQLVRKPRQSKIKKSDSPALNKGFNSKKKKFTDLNSPQKRGVCTRVGTMTP) are disordered. A 3-methylthioaspartic acid modification is found at aspartate 102. Positions 118 to 137 (SGVDGRRQGRSLYGTKKPKN) are disordered.

This sequence belongs to the universal ribosomal protein uS12 family. Part of the 30S ribosomal subunit. Contacts proteins S8 and S17. May interact with IF1 in the 30S initiation complex.

In terms of biological role, with S4 and S5 plays an important role in translational accuracy. Functionally, interacts with and stabilizes bases of the 16S rRNA that are involved in tRNA selection in the A site and with the mRNA backbone. Located at the interface of the 30S and 50S subunits, it traverses the body of the 30S subunit contacting proteins on the other side and probably holding the rRNA structure together. The combined cluster of proteins S8, S12 and S17 appears to hold together the shoulder and platform of the 30S subunit. This Staphylococcus aureus (strain Mu3 / ATCC 700698) protein is Small ribosomal subunit protein uS12.